The sequence spans 291 residues: 2-dehydro-3-deoxyphosphooctonate aldolase 2 (291 aa).

Position 2 is an N-acetylalanine (Ala2).

It belongs to the KdsA family. In terms of tissue distribution, expressed in roots, apical meristem, emerging leaves, hydathodes of young leaves, styles of mature flowers and funicules of mature siliques.

The protein resides in the cytoplasm. The catalysed reaction is D-arabinose 5-phosphate + phosphoenolpyruvate + H2O = 3-deoxy-alpha-D-manno-2-octulosonate-8-phosphate + phosphate. Its function is as follows. Catalyzes the stereospecific condensation of D-arabinose 5-phosphate and phosphoenolpyruvate to form 3-deoxy-D-manno-octulosonate 8-phosphate (KDO-8-phosphate) and inorganic phosphate. Involved in the biosynthesis of 3-deoxy-D-manno-octulosonate (KDO) which is an indispensable component of rhamnogalacturonan II (RG-II), a structurally complex pectic polysaccharide of the primary cell wall. RG-II is essential for the cell wall integrity of rapidly growing tissues and pollen tube growth and elongation. The sequence is that of 2-dehydro-3-deoxyphosphooctonate aldolase 2 (KDSA2) from Arabidopsis thaliana (Mouse-ear cress).